Consider the following 214-residue polypeptide: Large ribosomal subunit protein uL3 (214 aa).

Belongs to the universal ribosomal protein uL3 family. As to quaternary structure, part of the 50S ribosomal subunit. Forms a cluster with proteins L14 and L19.

In terms of biological role, one of the primary rRNA binding proteins, it binds directly near the 3'-end of the 23S rRNA, where it nucleates assembly of the 50S subunit. This Streptomyces coelicolor (strain ATCC BAA-471 / A3(2) / M145) protein is Large ribosomal subunit protein uL3.